The primary structure comprises 164 residues: Putative Cys-tRNA(Pro)/Cys-tRNA(Cys) deacylase EbsC (164 aa).

It belongs to the prolyl-tRNA editing family. YbaK/EbsC subfamily.

Affects the expression of the receptor, named binding substance, that mediates mating aggregate formation. Could be a regulatory protein that suppresses the function or expression of ebsA and/or ebsMB. The sequence is that of Putative Cys-tRNA(Pro)/Cys-tRNA(Cys) deacylase EbsC from Enterococcus faecalis (strain ATCC 700802 / V583).